A 115-amino-acid polypeptide reads, in one-letter code: Large ribosomal subunit protein bL19 (115 aa).

The protein belongs to the bacterial ribosomal protein bL19 family.

Functionally, this protein is located at the 30S-50S ribosomal subunit interface and may play a role in the structure and function of the aminoacyl-tRNA binding site. This chain is Large ribosomal subunit protein bL19, found in Streptococcus gordonii (strain Challis / ATCC 35105 / BCRC 15272 / CH1 / DL1 / V288).